Reading from the N-terminus, the 423-residue chain is AP-1 complex subunit mu-1 (423 aa).

An N-acetylserine modification is found at Ser2. Residues Thr152, Thr154, and Thr223 each carry the phosphothreonine modification. Residues 168–421 (KNEVFLDVIE…ITQNGDYQLR (254 aa)) enclose the MHD domain.

Belongs to the adaptor complexes medium subunit family. As to quaternary structure, adaptor protein complex 1 (AP-1) is a heterotetramer composed of two large adaptins (gamma-type subunit AP1G1 and beta-type subunit AP1B1), a medium adaptin (mu-type subunit AP1M1 or AP1M2) and a small adaptin (sigma-type subunit AP1S1 or AP1S2 or AP1S3). Interacts with MARCHF11. Post-translationally, phosphorylation of membrane-bound AP1M1/AP1M2 increases its affinity for sorting signals.

The protein resides in the cytoplasmic vesicle. It is found in the clathrin-coated vesicle membrane. The protein localises to the golgi apparatus. Its function is as follows. Subunit of clathrin-associated adaptor protein complex 1 that plays a role in protein sorting in the trans-Golgi network (TGN) and endosomes. The AP complexes mediate the recruitment of clathrin to membranes and the recognition of sorting signals within the cytosolic tails of transmembrane cargo molecules. The protein is AP-1 complex subunit mu-1 of Bos taurus (Bovine).